A 266-amino-acid polypeptide reads, in one-letter code: Type III pantothenate kinase (266 aa).

ATP is bound at residue 9 to 16; the sequence is DAGNSRIK. Residues tyrosine 96 and 103–106 each bind substrate; that span reads GSDR. The Proton acceptor role is filled by aspartate 105. Threonine 129 is an ATP binding site. Threonine 189 is a substrate binding site.

Belongs to the type III pantothenate kinase family. In terms of assembly, homodimer. NH4(+) is required as a cofactor. It depends on K(+) as a cofactor.

The protein localises to the cytoplasm. It carries out the reaction (R)-pantothenate + ATP = (R)-4'-phosphopantothenate + ADP + H(+). The protein operates within cofactor biosynthesis; coenzyme A biosynthesis; CoA from (R)-pantothenate: step 1/5. Functionally, catalyzes the phosphorylation of pantothenate (Pan), the first step in CoA biosynthesis. This is Type III pantothenate kinase from Burkholderia cenocepacia (strain ATCC BAA-245 / DSM 16553 / LMG 16656 / NCTC 13227 / J2315 / CF5610) (Burkholderia cepacia (strain J2315)).